We begin with the raw amino-acid sequence, 271 residues long: PA-phosphatase related-family protein DDB_G0284367 (271 aa).

A run of 6 helical transmembrane segments spans residues 23–43 (FLCLGIFVIESVLFNFVIPPF), 68–88 (IVPVWLLMLIALGLPMVVFIG), 102–122 (AALGLFQAFTITMLFTDILKV), 150–170 (FPSGHSSVSFCGMTFLSFYLC), 181–201 (GNILKALVCLCPFMISALVAV), and 211–231 (FSDILAGSVIGLSIGVFVYFM).

Belongs to the PA-phosphatase related phosphoesterase family.

The protein localises to the membrane. This is PA-phosphatase related-family protein DDB_G0284367 from Dictyostelium discoideum (Social amoeba).